The primary structure comprises 238 residues: Response regulator receiver protein Anae109_2439 (238 aa).

Response regulatory domains lie at 3-117 and 121-228; these read RYLI…AAAR and LVAV…ERLH. 4-aspartylphosphate occurs at positions 52 and 169.

Is diphosphorylated by GchK.

Its function is as follows. Member of the two-component regulatory system GcHK/Anae109_2439. Is involved in a signal transduction system responding to oxygen availability. The chain is Response regulator receiver protein Anae109_2439 from Anaeromyxobacter sp. (strain Fw109-5).